Reading from the N-terminus, the 100-residue chain is MARKSLIQRERKRQKLEQKYHLIRRSSKKEISKVSSLSDKWEIHGKLQSPPRNSAPTRLHRRCFSTGRPRANYRDFGLSGHILRERVHACLLPGATRSSW.

This sequence belongs to the universal ribosomal protein uS14 family. Part of the 30S ribosomal subunit.

The protein localises to the plastid. Its subcellular location is the chloroplast. In terms of biological role, binds 16S rRNA, required for the assembly of 30S particles. The chain is Small ribosomal subunit protein uS14c from Liriodendron tulipifera (Tuliptree).